Consider the following 182-residue polypeptide: Inner membrane-spanning protein YciB (182 aa).

5 helical membrane-spanning segments follow: residues 22–42 (IYAA…VVWV), 53–73 (ITLV…NEAF), 76–96 (WKVT…QFLF), 121–141 (FSWG…AFYL), and 149–169 (FKVF…GIYI).

This sequence belongs to the YciB family.

It is found in the cell inner membrane. In terms of biological role, plays a role in cell envelope biogenesis, maintenance of cell envelope integrity and membrane homeostasis. The sequence is that of Inner membrane-spanning protein YciB from Tolumonas auensis (strain DSM 9187 / NBRC 110442 / TA 4).